The chain runs to 576 residues: MLGHNIYEEDDAFNPFADSVSPLNPPKTDQEPSAEGVEEESPNVQASPPKTHIYTSPRKRSVNLKSLPFETLTLDSAPLGPLQFSDAPSMAPENNRLEVGLNTKINPLKGSSPALNADFSANKPWISEVNSFSPSPIGATENPTIPNSEQTVDTLDAASSSAPNFTHTVSSASSQKQGSTSLTDTENQKAHPAAAPQSLTPFYIQVHDPHTVKEITKSHTVYSVSTRLEEHNQPSVSNVTVQRRYNDFAFLYQLLSNNHPGCIIPPIPEKQVVGRFDDEFIEQRRAALEVMLRKISAHPVLRDDYSFKLFLEAETFDPRMTHRTTLIESSSSPLRSGPSTSGLLDSFTSAFHTSGSSKFSEQDPILIEAKDTLDSLETQLKSVYHALLLSIDQRIQFASAIHDFGEAVGNLSLVDLEPTLSSKFDGLSQLQVELRFVQERKVAQDNLTLGTTLEEYIRYVESAKNAFTTRQKLWQTWQSSVQAVSRAKTQLEKCKKQAKSQQKSLPYLEEQYEKYRAKAADLEKEFSESTTLLKRDLSSLTTSRVDDLKASVETWLESAIESQKEIIERWESFLDQ.

Disordered stretches follow at residues 1 to 60 and 156 to 198; these read MLGH…PRKR and DAAS…APQS. Residue Thr-55 is modified to Phosphothreonine. Polar residues predominate over residues 156–169; that stretch reads DAASSSAPNFTHTV. Positions 170-181 are enriched in low complexity; it reads SSASSQKQGSTS. The PX domain occupies 200–317; that stretch reads TPFYIQVHDP…KLFLEAETFD (118 aa). Residues Arg-244, Lys-270, and Arg-284 each contribute to the a 1,2-diacyl-sn-glycero-3-phospho-(1D-myo-inositol-3-phosphate) site. Ser-332 carries the phosphoserine modification.

It belongs to the sorting nexin family. As to quaternary structure, component of the retromer complex which consists of vps29, vps26, vps35, vps5 and vps17.

It localises to the cytoplasm. Its subcellular location is the golgi apparatus. It is found in the membrane. Its function is as follows. Required for efficient sporulation target of PtdIns(3)P in vesicle transport required for onset of the forespore membrane formation. Functionally, plays a role in vesicular protein sorting. Required for the endosome-to-Golgi retrieval of the vacuolar protein sorting receptor pep1/vps10. Component of the membrane-associated retromer complex which is essential in endosome-to-Golgi retrograde transport. The vps29-vps26-vps35 subcomplex may be involved in cargo selection. The protein is Vacuolar protein sorting-associated protein vps5 (vps5) of Schizosaccharomyces pombe (strain 972 / ATCC 24843) (Fission yeast).